Reading from the N-terminus, the 611-residue chain is Virulence metalloprotease (611 aa).

The N-terminal stretch at 1–25 (MKKVQRQMKWLFLAASISAALPVSA) is a signal peptide. Residues 26 to 199 (AKMVQVDDPS…VLQTWEGLNH (174 aa)) constitute a propeptide that is removed on maturation. Zn(2+) is bound at residue H346. Residue E347 is part of the active site. 2 residues coordinate Zn(2+): H350 and E370. Catalysis depends on H429, which acts as the Proton donor.

The protein belongs to the peptidase M4 family. The cofactor is Ca(2+). Zn(2+) is required as a cofactor. Post-translationally, seems to be more extensively processed.

It is found in the secreted. In terms of biological role, extracellular zinc metalloprotease involved in the virulence mechanism of V.anguillarum. The protein is Virulence metalloprotease (empA) of Vibrio anguillarum (Listonella anguillarum).